A 195-amino-acid chain; its full sequence is Shikimate kinase (195 aa).

21 to 26 (GTGKTS) is a binding site for ATP. T25 is a Mg(2+) binding site. 3 residues coordinate substrate: D43, R67, and G89. The segment at 128–148 (REQRPSFSGKASTEISEETMR) is disordered. ATP is bound at residue R131. Polar residues predominate over residues 132–141 (PSFSGKASTE). R158 lines the substrate pocket.

Belongs to the shikimate kinase family. Monomer. The cofactor is Mg(2+).

It localises to the cytoplasm. The catalysed reaction is shikimate + ATP = 3-phosphoshikimate + ADP + H(+). The protein operates within metabolic intermediate biosynthesis; chorismate biosynthesis; chorismate from D-erythrose 4-phosphate and phosphoenolpyruvate: step 5/7. In terms of biological role, catalyzes the specific phosphorylation of the 3-hydroxyl group of shikimic acid using ATP as a cosubstrate. This chain is Shikimate kinase, found in Syntrophus aciditrophicus (strain SB).